The primary structure comprises 389 residues: Phosphoglycerate kinase (389 aa).

Substrate contacts are provided by residues 19-21 (DYN), arginine 34, 57-60 (HLGR), arginine 117, and arginine 150. Residues lysine 200, glycine 288, glutamate 319, and 347–350 (GGDS) contribute to the ATP site.

It belongs to the phosphoglycerate kinase family. In terms of assembly, monomer.

Its subcellular location is the cytoplasm. It carries out the reaction (2R)-3-phosphoglycerate + ATP = (2R)-3-phospho-glyceroyl phosphate + ADP. Its pathway is carbohydrate degradation; glycolysis; pyruvate from D-glyceraldehyde 3-phosphate: step 2/5. This chain is Phosphoglycerate kinase, found in Deinococcus geothermalis (strain DSM 11300 / CIP 105573 / AG-3a).